Consider the following 320-residue polypeptide: Olfactory receptor 2AT4 (320 aa).

Topologically, residues 1-31 (MDATACNESVDGSPVFYLLGIPSLPETFFLP) are extracellular. Asparagine 7 carries an N-linked (GlcNAc...) asparagine glycan. A helical transmembrane segment spans residues 32-52 (VFFIFLLFYLLILMGNALILV). The Cytoplasmic segment spans residues 53–62 (AVVAEPSLHK). Residues 63 to 83 (PMYFFLINLSTLDILFTTTTV) form a helical membrane-spanning segment. The Extracellular portion of the chain corresponds to 84–102 (PKMLSLFLLGDRFLSFSSC). Cysteine 102 and cysteine 184 form a disulfide bridge. A helical transmembrane segment spans residues 103-123 (LLQMYLFQSFTCSEAFILVVM). The Cytoplasmic segment spans residues 124-145 (AYDRYVAICHPLHYPVLMNPQT). A helical membrane pass occupies residues 146 to 166 (NATLAASAWLTALLLPIPAVV). The Extracellular portion of the chain corresponds to 167 to 200 (RTSQMAYNSIAYIYHCFCDHLAVVQASCSDTTPQ). The chain crosses the membrane as a helical span at residues 201 to 221 (TLMGFCIAMVVSFLPLLLVLL). At 222–245 (SYVHILASVLRISSLEGRAKAFST) the chain is on the cytoplasmic side. The helical transmembrane segment at 246–266 (CSSHLLVVGTYYSSIAIAYVA) threads the bilayer. Topologically, residues 267–276 (YRADLPLDFH) are extracellular. A helical transmembrane segment spans residues 277 to 297 (IMGNVVYAILTPILNPLIYTL). Residues 298-320 (RNRDVKAAITKIMSQDPGCDRSI) are Cytoplasmic-facing.

Belongs to the G-protein coupled receptor 1 family. In terms of tissue distribution, detected in the keratinocytes of the epidermis (at protein level). Detected in hair follicles in proximal outer root sheath and hair matrix keratinocytes (at protein level).

The protein resides in the cell membrane. Olfactory receptor. Activated by the synthetic sandalwood odorant sandalore. Endogenous ligand is unknown. The activity of this receptor is probably mediated by G proteins which induce elevation of intracellular Ca(2+), a cAMP-dependent pathway and phosphorylation of MAPK1/ERK2, MAPK3/ERK1 and p38 MAPKs. Activation of OR2AT4 induces proliferation, migration, and re-epithelialization during wound-healing processes of keratinocytes. Stimulation of OR2AT4 by sandalore promotes hair growth by decreasing apoptosis and increasing production of the anagen-prolonging growth factor IGF1 as well as other pathways involving various kinases. The chain is Olfactory receptor 2AT4 from Homo sapiens (Human).